A 201-amino-acid polypeptide reads, in one-letter code: Elongation factor Ts (201 aa).

The involved in Mg(2+) ion dislocation from EF-Tu stretch occupies residues 83–86 (TDFV).

This sequence belongs to the EF-Ts family.

It is found in the cytoplasm. In terms of biological role, associates with the EF-Tu.GDP complex and induces the exchange of GDP to GTP. It remains bound to the aminoacyl-tRNA.EF-Tu.GTP complex up to the GTP hydrolysis stage on the ribosome. The chain is Elongation factor Ts from Methylacidiphilum infernorum (isolate V4) (Methylokorus infernorum (strain V4)).